We begin with the raw amino-acid sequence, 345 residues long: Telomere-binding protein cav (345 aa).

The required for binding to Su(var)205 stretch occupies residues Arg-115 to Glu-337. 2 disordered regions span residues Arg-145 to Gln-180 and Pro-200 to Pro-231. Short sequence motifs (su(var)205-binding Pro-containing repeat) lie at residues Pro-231–Glu-237 and Pro-298–Glu-304.

Component of the HipHop-HOAP telomere capping complex, composed of at least HipHop and cav/HOAP, and may include Su(var)205/HP1; HipHop and cav/HOAP, but not Su(var)205, are interdependent for their protein stability. Interacts with HipHop (via N-terminus). Interacts (via C-terminus) with Su(var)205/HP1 dimer (via hinge and chromoshadow domain) and Orc1; possibly interacts with other components of the origin recognition complex (ORC). Each molecule of cav/HOAP interacts with 2 molecules of Su(var)205/HP1. The HipHop-HOAP complex recruits the MTV complex, consisting of moi/modigliani, tea and ver/verrocchio, to telomeres, forming the terminin telomere-capping complex. Interacts with moi/modigliani; the interaction is direct. Interacts with ver/verrochio; the interaction is direct. Interacts with HP6, which is also part of the terminin complex. Interacts (via N-terminus) with peo/pendolino (via N-terminus); the interaction is direct.

It is found in the nucleus. The protein localises to the chromosome. It localises to the telomere. Its function is as follows. Part of the HipHop-HOAP complex that recruits the MTV complex to form the terminin telomere-capping complex, which binds to chromosome ends in a sequence-independent manner and prevents telomere fusion. Telomere capping is independent of the origin recognition complex (ORC). In Drosophila melanogaster (Fruit fly), this protein is Telomere-binding protein cav.